Reading from the N-terminus, the 447-residue chain is MSTVTTPSAPKVGFVSLGCPKALVDSERILTQLRMEGYEVVATYEDADVVVVNTCGFIDTAKAESLEVIGEAIKENGKVIVTGCMGVDASVIRNVHPSVLSVTGPQQYEQVVNAVHDVVPPRKDHNPLIDLVPPQGVKLTPRHYAYLKISEGCNHSCSFCIIPSMRGKLVSRPVGDVLDEAKRLVKSGVKELLVISQDTSAYGVDVKYRTGFWDGQPVKTRMTELCQALGSMGVWVRLHYVYPYPHVDELIPLMAAGKILPYLDIPFQHASPKILKLMKRPAFEDKTLARIKNWREQCPDLIIRSTFIVGFPGETEEDFQYLLDWLTEAQLDRVGCFQYSPVEGAPANLLDAAIVPDDVKQDRWDRFMAHQQAISAARLQMKIGKEIEVLIDEVDDRGAVGRCFFDAPEIDGNVFIGLDDGSTVQPGDKIMCRVTDADEYDLWAEML.

Residues 10–120 (PKVGFVSLGC…VVNAVHDVVP (111 aa)) form the MTTase N-terminal domain. Residues C19, C55, C84, C153, C157, and C160 each contribute to the [4Fe-4S] cluster site. The Radical SAM core domain occupies 139–377 (LTPRHYAYLK…MAHQQAISAA (239 aa)). Positions 380 to 447 (QMKIGKEIEV…DEYDLWAEML (68 aa)) constitute a TRAM domain.

It belongs to the methylthiotransferase family. RimO subfamily. [4Fe-4S] cluster is required as a cofactor.

The protein localises to the cytoplasm. The catalysed reaction is L-aspartate(89)-[ribosomal protein uS12]-hydrogen + (sulfur carrier)-SH + AH2 + 2 S-adenosyl-L-methionine = 3-methylsulfanyl-L-aspartate(89)-[ribosomal protein uS12]-hydrogen + (sulfur carrier)-H + 5'-deoxyadenosine + L-methionine + A + S-adenosyl-L-homocysteine + 2 H(+). Functionally, catalyzes the methylthiolation of an aspartic acid residue of ribosomal protein uS12. The protein is Ribosomal protein uS12 methylthiotransferase RimO of Pseudomonas syringae pv. syringae (strain B728a).